Here is a 311-residue protein sequence, read N- to C-terminus: Protein N-terminal asparagine amidohydrolase (311 aa).

Monomer.

It localises to the cytoplasm. The catalysed reaction is N-terminal L-asparaginyl-[protein] + H2O + H(+) = N-terminal L-aspartyl-[protein] + NH4(+). Its function is as follows. N-terminal asparagine deamidase that mediates deamidation of N-terminal asparagine residues to aspartate. Required for the ubiquitin-dependent turnover of intracellular proteins that initiate with Met-Asn. These proteins are acetylated on the retained initiator methionine and can subsequently be modified by the removal of N-acetyl methionine by acylaminoacid hydrolase (AAH). Conversion of the resulting N-terminal asparagine to aspartate by NTAN1/PNAD renders the protein susceptible to arginylation, polyubiquitination and degradation as specified by the N-end rule. This enzyme does not act on substrates with internal or C-terminal asparagines and does not act on glutamine residues in any position. This is Protein N-terminal asparagine amidohydrolase (NTAN1) from Sus scrofa (Pig).